A 255-amino-acid polypeptide reads, in one-letter code: Pimeloyl-[acyl-carrier protein] methyl ester esterase (255 aa).

Residues Trp-18, Ser-78–Leu-79, and Phe-139–Asp-143 each bind substrate. Ser-78 acts as the Nucleophile in catalysis. Residues Asp-203 and His-233 contribute to the active site. A substrate-binding site is contributed by His-233.

The protein belongs to the AB hydrolase superfamily. Carboxylesterase BioH family. In terms of assembly, monomer.

Its subcellular location is the cytoplasm. The catalysed reaction is 6-carboxyhexanoyl-[ACP] methyl ester + H2O = 6-carboxyhexanoyl-[ACP] + methanol + H(+). The protein operates within cofactor biosynthesis; biotin biosynthesis. Functionally, the physiological role of BioH is to remove the methyl group introduced by BioC when the pimeloyl moiety is complete. It allows to synthesize pimeloyl-ACP via the fatty acid synthetic pathway through the hydrolysis of the ester bonds of pimeloyl-ACP esters. This Xylella fastidiosa (strain M12) protein is Pimeloyl-[acyl-carrier protein] methyl ester esterase.